The chain runs to 127 residues: Putative membrane protein insertion efficiency factor (127 aa).

The tract at residues 71-106 (DPPPPPRLHRAAAARMPRQRDADPRDTTRCSSTGAE) is disordered. Basic and acidic residues predominate over residues 88–98 (RQRDADPRDTT).

Belongs to the UPF0161 family.

Its subcellular location is the cell inner membrane. Its function is as follows. Could be involved in insertion of integral membrane proteins into the membrane. This Sorangium cellulosum (strain So ce56) (Polyangium cellulosum (strain So ce56)) protein is Putative membrane protein insertion efficiency factor.